The following is a 262-amino-acid chain: Phosphoribosylformylglycinamidine synthase subunit PurQ (262 aa).

One can recognise a Glutamine amidotransferase type-1 domain in the interval 2 to 238 (RIAVIQFPGT…FAWQLPRKHP (237 aa)). Cys87 (nucleophile) is an active-site residue. Catalysis depends on residues His223 and Glu225.

In terms of assembly, part of the FGAM synthase complex composed of 1 PurL, 1 PurQ and 2 PurS subunits.

It localises to the cytoplasm. It catalyses the reaction N(2)-formyl-N(1)-(5-phospho-beta-D-ribosyl)glycinamide + L-glutamine + ATP + H2O = 2-formamido-N(1)-(5-O-phospho-beta-D-ribosyl)acetamidine + L-glutamate + ADP + phosphate + H(+). The enzyme catalyses L-glutamine + H2O = L-glutamate + NH4(+). It participates in purine metabolism; IMP biosynthesis via de novo pathway; 5-amino-1-(5-phospho-D-ribosyl)imidazole from N(2)-formyl-N(1)-(5-phospho-D-ribosyl)glycinamide: step 1/2. Functionally, part of the phosphoribosylformylglycinamidine synthase complex involved in the purines biosynthetic pathway. Catalyzes the ATP-dependent conversion of formylglycinamide ribonucleotide (FGAR) and glutamine to yield formylglycinamidine ribonucleotide (FGAM) and glutamate. The FGAM synthase complex is composed of three subunits. PurQ produces an ammonia molecule by converting glutamine to glutamate. PurL transfers the ammonia molecule to FGAR to form FGAM in an ATP-dependent manner. PurS interacts with PurQ and PurL and is thought to assist in the transfer of the ammonia molecule from PurQ to PurL. The chain is Phosphoribosylformylglycinamidine synthase subunit PurQ from Methanothrix thermoacetophila (strain DSM 6194 / JCM 14653 / NBRC 101360 / PT) (Methanosaeta thermophila).